Here is a 382-residue protein sequence, read N- to C-terminus: Galactose-1-phosphate uridylyltransferase (382 aa).

Positions 52 and 55 each coordinate Zn(2+). UDP-alpha-D-glucose contacts are provided by residues Ala-61 and 77 to 78 (ND). Residue His-121 participates in Zn(2+) binding. A UDP-alpha-D-glucose-binding site is contributed by Asn-185. His-196 serves as a coordination point for Zn(2+). His-198 functions as the Tele-UMP-histidine intermediate in the catalytic mechanism. Gln-200 is a UDP-alpha-D-glucose binding site. Fe cation-binding residues include Glu-214, His-313, His-330, and His-332. Residues 345–348 (KFLV) and 350–351 (FE) contribute to the UDP-alpha-D-glucose site.

It belongs to the galactose-1-phosphate uridylyltransferase type 1 family. As to quaternary structure, homodimer. It depends on Zn(2+) as a cofactor.

It carries out the reaction alpha-D-galactose 1-phosphate + UDP-alpha-D-glucose = alpha-D-glucose 1-phosphate + UDP-alpha-D-galactose. The protein operates within carbohydrate metabolism; galactose metabolism. In terms of biological role, essential for growth on galactose but not for cellulase induction. This Hypocrea jecorina (Trichoderma reesei) protein is Galactose-1-phosphate uridylyltransferase (gal7).